The following is a 213-amino-acid chain: MVQAKICGLSTLDAVTAAVAGGAAFVGFVFFEKSPRNLDPEAAARLVASLRQSPVKTVAVTVDPDDALIDRLMATMKPDLIQVHGRETPSRVRQIAERSGAGVIKAFSVSSAADVDQAGAFDGLVEHLMFDARPVEGSVLPGGTGARFDWSLLQGRRFSRPHFLAGGLDPWNVAEAVKASGAPLVDVSSGVERGPGLKDPALITAFLDAVKRV.

Belongs to the TrpF family.

The enzyme catalyses N-(5-phospho-beta-D-ribosyl)anthranilate = 1-(2-carboxyphenylamino)-1-deoxy-D-ribulose 5-phosphate. Its pathway is amino-acid biosynthesis; L-tryptophan biosynthesis; L-tryptophan from chorismate: step 3/5. The sequence is that of N-(5'-phosphoribosyl)anthranilate isomerase from Caulobacter sp. (strain K31).